The following is a 63-amino-acid chain: MPQLDTSTWFLTILSVMLTLFTLLQPKISMHLYTPNPKPMPTKTQKQHSPWNTAWTKIYLPLL.

Residues 8 to 24 (TWFLTILSVMLTLFTLL) form a helical membrane-spanning segment. Lysine 57 is modified (N6-acetyllysine).

It belongs to the ATPase protein 8 family. In terms of assembly, component of the ATP synthase complex composed at least of ATP5F1A/subunit alpha, ATP5F1B/subunit beta, ATP5MC1/subunit c (homooctomer), MT-ATP6/subunit a, MT-ATP8/subunit 8, ATP5ME/subunit e, ATP5MF/subunit f, ATP5MG/subunit g, ATP5MK/subunit k, ATP5MJ/subunit j, ATP5F1C/subunit gamma, ATP5F1D/subunit delta, ATP5F1E/subunit epsilon, ATP5PF/subunit F6, ATP5PB/subunit b, ATP5PD/subunit d, ATP5PO/subunit OSCP. ATP synthase complex consists of a soluble F(1) head domain (subunits alpha(3) and beta(3)) - the catalytic core - and a membrane F(0) domain - the membrane proton channel (subunits c, a, 8, e, f, g, k and j). These two domains are linked by a central stalk (subunits gamma, delta, and epsilon) rotating inside the F1 region and a stationary peripheral stalk (subunits F6, b, d, and OSCP). Interacts with PRICKLE3.

Its subcellular location is the mitochondrion membrane. In terms of biological role, subunit 8, of the mitochondrial membrane ATP synthase complex (F(1)F(0) ATP synthase or Complex V) that produces ATP from ADP in the presence of a proton gradient across the membrane which is generated by electron transport complexes of the respiratory chain. ATP synthase complex consist of a soluble F(1) head domain - the catalytic core - and a membrane F(1) domain - the membrane proton channel. These two domains are linked by a central stalk rotating inside the F(1) region and a stationary peripheral stalk. During catalysis, ATP synthesis in the catalytic domain of F(1) is coupled via a rotary mechanism of the central stalk subunits to proton translocation. In vivo, can only synthesize ATP although its ATP hydrolase activity can be activated artificially in vitro. Part of the complex F(0) domain. The protein is ATP synthase F(0) complex subunit 8 of Physeter macrocephalus (Sperm whale).